The sequence spans 623 residues: Arginine--tRNA ligase (623 aa).

The 'HIGH' region signature appears at 116–126 (ANPIHPLHVGH).

Belongs to the class-I aminoacyl-tRNA synthetase family.

The protein resides in the cytoplasm. The catalysed reaction is tRNA(Arg) + L-arginine + ATP = L-arginyl-tRNA(Arg) + AMP + diphosphate. The polypeptide is Arginine--tRNA ligase (Sulfurisphaera tokodaii (strain DSM 16993 / JCM 10545 / NBRC 100140 / 7) (Sulfolobus tokodaii)).